A 243-amino-acid polypeptide reads, in one-letter code: Biosynthetic peptidoglycan transglycosylase (243 aa).

Residues 22 to 42 (LIVLLVLALMSVLQVIVFRFV) traverse the membrane as a helical segment.

It belongs to the glycosyltransferase 51 family.

It localises to the cell inner membrane. It catalyses the reaction [GlcNAc-(1-&gt;4)-Mur2Ac(oyl-L-Ala-gamma-D-Glu-L-Lys-D-Ala-D-Ala)](n)-di-trans,octa-cis-undecaprenyl diphosphate + beta-D-GlcNAc-(1-&gt;4)-Mur2Ac(oyl-L-Ala-gamma-D-Glu-L-Lys-D-Ala-D-Ala)-di-trans,octa-cis-undecaprenyl diphosphate = [GlcNAc-(1-&gt;4)-Mur2Ac(oyl-L-Ala-gamma-D-Glu-L-Lys-D-Ala-D-Ala)](n+1)-di-trans,octa-cis-undecaprenyl diphosphate + di-trans,octa-cis-undecaprenyl diphosphate + H(+). It functions in the pathway cell wall biogenesis; peptidoglycan biosynthesis. Its function is as follows. Peptidoglycan polymerase that catalyzes glycan chain elongation from lipid-linked precursors. This chain is Biosynthetic peptidoglycan transglycosylase, found in Xylella fastidiosa (strain 9a5c).